The sequence spans 568 residues: C6 finger domain transcription factor BOA13 (568 aa).

The segment at residues 14–41 is a DNA-binding region (zn(2)-C6 fungal-type); that stretch reads CNECHASKVRCSGERTGCRRCVYNQQKC. 3 disordered regions span residues 92–114, 207–278, and 467–490; these read EANG…EGIT, ATSS…HHNH, and RSRS…FSNP. Positions 242 to 259 are enriched in basic and acidic residues; it reads HSDLSEKQAQHAQNDLRW. The span at 260-274 shows a compositional bias: polar residues; that stretch reads RSQSQSYKRPTISTQ. The segment covering 470-490 has biased composition (low complexity); sequence SLSTPSPRNTPSTSNSPFSNP.

It is found in the nucleus. In terms of biological role, transcription factor that probably regulates the gene clusters that mediates the biosynthesis of botcinin acid and its botcinin derivatives, acetate-derived polyketides that contribute to virulence when combined with the sesquiterpene botrydial. Botcinin acid and its derivatives have been shown to induce chlorosis and necrosis during host plant infection, but also have antifungal activities. The polypeptide is C6 finger domain transcription factor BOA13 (Botryotinia fuckeliana (strain B05.10) (Noble rot fungus)).